A 203-amino-acid chain; its full sequence is Dephospho-CoA kinase (203 aa).

One can recognise a DPCK domain in the interval 4–203 (VIGITGGIAT…EEGYIQSESE (200 aa)). 12–17 (ATGKST) provides a ligand contact to ATP.

This sequence belongs to the CoaE family.

It localises to the cytoplasm. It catalyses the reaction 3'-dephospho-CoA + ATP = ADP + CoA + H(+). Its pathway is cofactor biosynthesis; coenzyme A biosynthesis; CoA from (R)-pantothenate: step 5/5. Its function is as follows. Catalyzes the phosphorylation of the 3'-hydroxyl group of dephosphocoenzyme A to form coenzyme A. In Staphylococcus epidermidis (strain ATCC 35984 / DSM 28319 / BCRC 17069 / CCUG 31568 / BM 3577 / RP62A), this protein is Dephospho-CoA kinase.